Consider the following 1955-residue polypeptide: Rootletin (1955 aa).

Coiled coils occupy residues 29-58 (EENR…ESIE), 162-223 (EENL…QQHT), 284-1303 (LMRK…AVES), 1368-1579 (VGVT…EELR), and 1607-1863 (RRWE…RTKG). 5 disordered regions span residues 321–341 (VTEN…DLKR), 391–451 (LTTK…KKLD), 504–551 (LKER…RSLK), 907–935 (EKLN…NEAV), and 961–998 (RDLE…QKTL). Composition is skewed to basic and acidic residues over residues 326 to 341 (MKSE…DLKR) and 396 to 451 (GEID…KKLD). 3 stretches are compositionally biased toward basic and acidic residues: residues 907 to 931 (EKLN…ESSK), 961 to 982 (RDLE…KMEL), and 989 to 998 (EDRKKEQKTL).

This sequence belongs to the rootletin family. In terms of tissue distribution, expressed in head ciliated neurons.

It localises to the cytoplasm. Its subcellular location is the cytoskeleton. The protein resides in the cilium basal body. The protein localises to the cilium axoneme. In terms of biological role, major structural component of the ciliary rootlet, a cytoskeletal-like structure in ciliated cells which originates from the basal body at the proximal end of a cilium and extends proximally toward the cell nucleus. Required for cilia integrity and function in sensory neurons. Maintains cilia integrity, partly by modulating the assembly and transport of intraflagellar proteins along the ciliary axoneme. Required for normal mating behavior and normal responses to environmental and chemical stimuli. This is Rootletin from Caenorhabditis elegans.